Here is a 105-residue protein sequence, read N- to C-terminus: Large ribosomal subunit protein eL36 (105 aa).

This sequence belongs to the eukaryotic ribosomal protein eL36 family. Component of the large ribosomal subunit.

It is found in the cytoplasm. Its subcellular location is the cytosol. Component of the large ribosomal subunit. The ribosome is a large ribonucleoprotein complex responsible for the synthesis of proteins in the cell. The sequence is that of Large ribosomal subunit protein eL36 (RPL36) from Gallus gallus (Chicken).